Consider the following 218-residue polypeptide: 2-phospho-L-lactate guanylyltransferase (218 aa).

Belongs to the CofC family. In terms of assembly, homodimer.

It catalyses the reaction (2S)-2-phospholactate + GTP + H(+) = (2S)-lactyl-2-diphospho-5'-guanosine + diphosphate. It functions in the pathway cofactor biosynthesis; coenzyme F420 biosynthesis. Functionally, guanylyltransferase that catalyzes the activation of (2S)-2-phospholactate (2-PL) as (2S)-lactyl-2-diphospho-5'-guanosine, via the condensation of 2-PL with GTP. It is involved in the biosynthesis of coenzyme F420, a hydride carrier cofactor. The polypeptide is 2-phospho-L-lactate guanylyltransferase (Methanocaldococcus fervens (strain DSM 4213 / JCM 15782 / AG86) (Methanococcus fervens)).